The following is a 246-amino-acid chain: Probable transcriptional regulatory protein WRi_002620 (246 aa).

The segment at 1–22 (MAGHSQFSNIKHRKGAQDAKRS) is disordered.

The protein belongs to the TACO1 family.

It is found in the cytoplasm. This Wolbachia sp. subsp. Drosophila simulans (strain wRi) protein is Probable transcriptional regulatory protein WRi_002620.